The following is a 161-amino-acid chain: Nucleotide-binding protein PputW619_0959 (161 aa).

It belongs to the YajQ family.

Nucleotide-binding protein. The protein is Nucleotide-binding protein PputW619_0959 of Pseudomonas putida (strain W619).